We begin with the raw amino-acid sequence, 182 residues long: PRKR-interacting protein 1 homolog (182 aa).

3 stretches are compositionally biased toward basic and acidic residues: residues Met1 to Ser18, Pro27 to Asp43, and Ile114 to Thr124. Disordered stretches follow at residues Met1 to His80 and Ile114 to Arg182. The required for RNA-binding stretch occupies residues Lys51–Lys143. Residues Leu99–Ser157 adopt a coiled-coil conformation. Over residues Ala125–Lys143 the composition is skewed to basic residues. The segment at Lys126 to Lys138 is required for nuclear localization. Over residues Ala144–Lys156 the composition is skewed to basic and acidic residues. The segment covering Glu164–Glu173 has biased composition (acidic residues).

It belongs to the PRKRIP1 family. As to quaternary structure, component of the pre-catalytic and post-catalytic spliceosome complexes.

The protein resides in the nucleus. Its subcellular location is the nucleolus. Functionally, required for pre-mRNA splicing as component of the spliceosome. Binds double-stranded RNA. The polypeptide is PRKR-interacting protein 1 homolog (prkrip1) (Danio rerio (Zebrafish)).